Consider the following 92-residue polypeptide: Small ribosomal subunit protein bS16 (92 aa).

Belongs to the bacterial ribosomal protein bS16 family.

This chain is Small ribosomal subunit protein bS16, found in Desulforudis audaxviator (strain MP104C).